The following is a 186-amino-acid chain: Peptidyl-tRNA hydrolase (186 aa).

Tyr-14 lines the tRNA pocket. His-19 (proton acceptor) is an active-site residue. TRNA contacts are provided by Tyr-64, Asn-66, and Asn-112.

This sequence belongs to the PTH family. As to quaternary structure, monomer.

Its subcellular location is the cytoplasm. The enzyme catalyses an N-acyl-L-alpha-aminoacyl-tRNA + H2O = an N-acyl-L-amino acid + a tRNA + H(+). In terms of biological role, hydrolyzes ribosome-free peptidyl-tRNAs (with 1 or more amino acids incorporated), which drop off the ribosome during protein synthesis, or as a result of ribosome stalling. Its function is as follows. Catalyzes the release of premature peptidyl moieties from peptidyl-tRNA molecules trapped in stalled 50S ribosomal subunits, and thus maintains levels of free tRNAs and 50S ribosomes. This chain is Peptidyl-tRNA hydrolase, found in Bacillus cereus (strain ATCC 14579 / DSM 31 / CCUG 7414 / JCM 2152 / NBRC 15305 / NCIMB 9373 / NCTC 2599 / NRRL B-3711).